A 261-amino-acid chain; its full sequence is LIM and SH3 domain protein 1 (261 aa).

At Met1 the chain carries N-acetylmethionine. The LIM zinc-binding domain maps to 5 to 56 (CARCGKIVYPTEKVNCLDKFWHKACFHCETCKMTLNMKNYKGYEKKPYCNAH). Position 42 is an N6-acetyllysine (Lys42). Nebulin repeat units follow at residues 61 to 95 (SFTMVADTPENLRLKQQSELQSQVRYKEEFEKNKG) and 97 to 131 (GFSVVADTPELQRIKKTQDQISNIKYHEEFEKSRM). A Phosphothreonine modification is found at Thr68. The residue at position 75 (Lys75) is an N6-methyllysine. Ser99 carries the phosphoserine modification. Position 104 is a phosphothreonine (Thr104). The interval 111 to 186 (KKTQDQISNI…QPVAQSYGGY (76 aa)) is disordered. At Lys112 the chain carries N6-succinyllysine. Ser118 is subject to Phosphoserine. Basic and acidic residues predominate over residues 121–130 (KYHEEFEKSR). A phosphoserine mark is found at Ser134 and Ser146. The span at 167–183 (SAPVYQQPQQQPVAQSY) shows a compositional bias: low complexity. The region spanning 202–261 (GGGKRYRAVYDYSAADEDEVSFQDGDTIVNVQQIDDGWMYGTVERTGDTGMLPANYVEAI) is the SH3 domain.

As to quaternary structure, interacts with F-actin. Interacts with ANKRD54. Interacts with KBTBD10.

The protein localises to the cytoplasm. The protein resides in the cell cortex. It localises to the cytoskeleton. Plays an important role in the regulation of dynamic actin-based, cytoskeletal activities. Agonist-dependent changes in LASP1 phosphorylation may also serve to regulate actin-associated ion transport activities, not only in the parietal cell but also in certain other F-actin-rich secretory epithelial cell types. The polypeptide is LIM and SH3 domain protein 1 (LASP1) (Homo sapiens (Human)).